A 341-amino-acid polypeptide reads, in one-letter code: Ubiquinone biosynthesis protein COQ4, mitochondrial (341 aa).

Residues 1–16 constitute a mitochondrion transit peptide; that stretch reads MLSRISSVRIGTQVRQ. Positions 220, 221, 224, and 236 each coordinate Zn(2+).

The protein belongs to the COQ4 family. In terms of assembly, component of a multi-subunit COQ enzyme complex, composed of at least COQ3, COQ4, COQ5, COQ6, COQ7 and COQ9. Zn(2+) is required as a cofactor.

It localises to the mitochondrion inner membrane. The catalysed reaction is a 4-hydroxy-3-methoxy-5-(all-trans-polyprenyl)benzoate + H(+) = a 2-methoxy-6-(all-trans-polyprenyl)phenol + CO2. It functions in the pathway cofactor biosynthesis; ubiquinone biosynthesis. Lyase that catalyzes the C1-decarboxylation of 4-hydroxy-3-methoxy-5-(all-trans-polyprenyl)benzoic acid into 2-methoxy-6-(all-trans-polyprenyl)phenol during ubiquinone biosynthesis. The chain is Ubiquinone biosynthesis protein COQ4, mitochondrial from Vanderwaltozyma polyspora (strain ATCC 22028 / DSM 70294 / BCRC 21397 / CBS 2163 / NBRC 10782 / NRRL Y-8283 / UCD 57-17) (Kluyveromyces polysporus).